Consider the following 303-residue polypeptide: Cysteine synthase B (303 aa).

N6-(pyridoxal phosphate)lysine is present on lysine 41. Residues asparagine 71, 174–178 (GTTGT), and serine 255 contribute to the pyridoxal 5'-phosphate site.

Belongs to the cysteine synthase/cystathionine beta-synthase family. The cofactor is pyridoxal 5'-phosphate.

It carries out the reaction O-acetyl-L-serine + hydrogen sulfide = L-cysteine + acetate. Its pathway is amino-acid biosynthesis; L-cysteine biosynthesis; L-cysteine from L-serine: step 2/2. Two cysteine synthase enzymes are found. Both catalyze the same reaction. Cysteine synthase B can also use thiosulfate in place of sulfide to give cysteine thiosulfonate as a product. The protein is Cysteine synthase B (cysM) of Salmonella typhimurium (strain LT2 / SGSC1412 / ATCC 700720).